Here is a 100-residue protein sequence, read N- to C-terminus: Small ribosomal subunit protein uS14c (100 aa).

The protein belongs to the universal ribosomal protein uS14 family. Part of the 30S ribosomal subunit.

Its subcellular location is the plastid. The protein localises to the chloroplast. Its function is as follows. Binds 16S rRNA, required for the assembly of 30S particles. The chain is Small ribosomal subunit protein uS14c from Euglena gracilis.